Consider the following 499-residue polypeptide: Putative hydrolase YuaR (499 aa).

The first 26 residues, 1 to 26 (MRVIMKPLRRTLVFFIFSVFLCGTVS), serve as a signal peptide directing secretion. Residues 94-393 (GSVIIISGGP…DAFPAVNFER (300 aa)) enclose the AB hydrolase-1 domain. Catalysis depends on serine 207, which acts as the Nucleophile. Aspartate 433 is an active-site residue. Histidine 460 acts as the Proton donor in catalysis.

This sequence belongs to the peptidase S33 family.

The polypeptide is Putative hydrolase YuaR (yuaR) (Escherichia coli (strain K12)).